A 236-amino-acid chain; its full sequence is Ribosome-inactivating protein saporin-3 (236 aa).

Glu-148 is an active-site residue.

It belongs to the ribosome-inactivating protein family. Type 1 RIP subfamily.

The enzyme catalyses Endohydrolysis of the N-glycosidic bond at one specific adenosine on the 28S rRNA.. Ribosome-inactivating protein of type 1, inhibits protein synthesis in animal cells. Useful as immunotoxin for pharmacological applications. The polypeptide is Ribosome-inactivating protein saporin-3 (SAP3) (Saponaria officinalis (Common soapwort)).